We begin with the raw amino-acid sequence, 610 residues long: UvrABC system protein C (610 aa).

Residues 16-94 (SQPGVYRMYD…IKLYQPRYNV (79 aa)) form the GIY-YIG domain. In terms of domain architecture, UVR spans 204-239 (DQVLTQLISRMETASQNLEFEEAARIRDQIQAVRRV).

The protein belongs to the UvrC family. Interacts with UvrB in an incision complex.

It localises to the cytoplasm. Its function is as follows. The UvrABC repair system catalyzes the recognition and processing of DNA lesions. UvrC both incises the 5' and 3' sides of the lesion. The N-terminal half is responsible for the 3' incision and the C-terminal half is responsible for the 5' incision. This chain is UvrABC system protein C, found in Escherichia coli (strain UTI89 / UPEC).